A 276-amino-acid chain; its full sequence is Rhomboid protease GlpG (276 aa).

The next 6 helical transmembrane spans lie at Gly-94 to Ile-114, Ile-142 to Gly-162, Leu-169 to Gln-189, Phe-192 to Trp-212, Leu-229 to Met-249, and Ala-250 to Leu-270. Ser-201 serves as the catalytic Nucleophile. Residue His-254 is part of the active site.

The protein belongs to the peptidase S54 family.

The protein resides in the cell inner membrane. It catalyses the reaction Cleaves type-1 transmembrane domains using a catalytic dyad composed of serine and histidine that are contributed by different transmembrane domains.. Rhomboid-type serine protease that catalyzes intramembrane proteolysis. The chain is Rhomboid protease GlpG from Salmonella dublin (strain CT_02021853).